The primary structure comprises 801 residues: Endonuclease MutS2 (801 aa).

ATP is bound at residue Gly336–Thr343. Positions Ala696–Thr721 are disordered. Basic residues predominate over residues Ala701 to Lys710. Positions Leu726–Ser801 constitute a Smr domain.

It belongs to the DNA mismatch repair MutS family. MutS2 subfamily. Homodimer. Binds to stalled ribosomes, contacting rRNA.

In terms of biological role, endonuclease that is involved in the suppression of homologous recombination and thus may have a key role in the control of bacterial genetic diversity. Acts as a ribosome collision sensor, splitting the ribosome into its 2 subunits. Detects stalled/collided 70S ribosomes which it binds and splits by an ATP-hydrolysis driven conformational change. Acts upstream of the ribosome quality control system (RQC), a ribosome-associated complex that mediates the extraction of incompletely synthesized nascent chains from stalled ribosomes and their subsequent degradation. Probably generates substrates for RQC. The chain is Endonuclease MutS2 from Leuconostoc citreum (strain KM20).